Here is a 387-residue protein sequence, read N- to C-terminus: Succinyl-diaminopimelate desuccinylase (387 aa).

Zn(2+) is bound at residue H75. D77 is a catalytic residue. D108 provides a ligand contact to Zn(2+). Catalysis depends on E139, which acts as the Proton acceptor. Zn(2+) is bound by residues E140, E168, and H357.

The protein belongs to the peptidase M20A family. DapE subfamily. In terms of assembly, homodimer. Requires Zn(2+) as cofactor. The cofactor is Co(2+).

It carries out the reaction N-succinyl-(2S,6S)-2,6-diaminopimelate + H2O = (2S,6S)-2,6-diaminopimelate + succinate. The protein operates within amino-acid biosynthesis; L-lysine biosynthesis via DAP pathway; LL-2,6-diaminopimelate from (S)-tetrahydrodipicolinate (succinylase route): step 3/3. Catalyzes the hydrolysis of N-succinyl-L,L-diaminopimelic acid (SDAP), forming succinate and LL-2,6-diaminopimelate (DAP), an intermediate involved in the bacterial biosynthesis of lysine and meso-diaminopimelic acid, an essential component of bacterial cell walls. The polypeptide is Succinyl-diaminopimelate desuccinylase (Caulobacter sp. (strain K31)).